Here is a 174-residue protein sequence, read N- to C-terminus: Peptidyl-prolyl cis-trans isomerase-like 1 (174 aa).

Residues 5-159 form the PPIase cyclophilin-type domain; it reads SPTYVTFDTS…EEIKIHRARL (155 aa).

This sequence belongs to the cyclophilin-type PPIase family. PPIL1 subfamily.

It carries out the reaction [protein]-peptidylproline (omega=180) = [protein]-peptidylproline (omega=0). Its function is as follows. PPIases accelerate the folding of proteins. It catalyzes the cis-trans isomerization of proline imidic peptide bonds in oligopeptides. This Cryptococcus neoformans var. neoformans serotype D (strain B-3501A) (Filobasidiella neoformans) protein is Peptidyl-prolyl cis-trans isomerase-like 1 (CYP1).